The following is a 501-amino-acid chain: Phosphatase and actin regulator 1 (501 aa).

The RPEL 1 repeat unit spans residues Met1–Phe18. Disordered stretches follow at residues Asp21–Ser46 and Asp295–Ser329. The segment covering Gly36 to Ser46 has biased composition (low complexity). The span at Asp295–Ala304 shows a compositional bias: basic and acidic residues. Acidic residues predominate over residues Glu317–Asn328. RPEL repeat units lie at residues Asp343–Thr368, Thr381–Asn406, and Arg419–Ser444. A disordered region spans residues Lys382 to Arg415. The segment covering Thr392–Arg415 has biased composition (basic and acidic residues).

The protein belongs to the phosphatase and actin regulator family. As to quaternary structure, interacts (via RPEL repeats) with ACTA1. As to expression, expressed in the gizzard, and in neurons from central and peripheral nervous systems.

The protein localises to the cytoplasm. It localises to the synapse. The protein resides in the nucleus. Binds actin monomers (G actin) and plays a role in the reorganization of the actin cytoskeleton and in formation of actin stress fibers. The chain is Phosphatase and actin regulator 1 (PHACTR1) from Gallus gallus (Chicken).